We begin with the raw amino-acid sequence, 116 residues long: UPF0342 protein LBA1592 (116 aa).

This sequence belongs to the UPF0342 family.

In Lactobacillus acidophilus (strain ATCC 700396 / NCK56 / N2 / NCFM), this protein is UPF0342 protein LBA1592.